Consider the following 181-residue polypeptide: MEPEIKVVNVVVSTQIGTDIDLEYAADILDNAEYEPEQFPGLVCRLSEPKVALLIFRSGKLNCTGARCKEDAVIAINKIVKELKEAGMDLIDNPEVKVQNMVATTELGMEPNLDDISTLECTEYEPEQFPGLVYRLSEPKVVVLIFGSGKVVITGLKVIEDAYIAFDKISKTLKELEEELY.

Repeat copies occupy residues 7 to 83 and 98 to 173.

Belongs to the TBP family.

Its function is as follows. General factor that plays a role in the activation of archaeal genes transcribed by RNA polymerase. Binds specifically to the TATA box promoter element which lies close to the position of transcription initiation. This Methanococcus maripaludis (strain DSM 14266 / JCM 13030 / NBRC 101832 / S2 / LL) protein is TATA-box-binding protein.